We begin with the raw amino-acid sequence, 295 residues long: MSSSRPVFRSRWLPYLLVAPQLVITVIFFIWPAGEALWYSLQSVDPFGFSSQFVGLENFVALFHDSYYLDAFWTTIKFSALVTFSGLLVSLFFAALVDYVVRGSRFYQTLMLLPYAVAPAVAAVLWIFLFNPGRGLITHFLGEFGYDWNHAQNSGQAMFLVVFASVWKQISYNFLFFFAALQSIPRSLVEAAAIDGAGPIRRFFRLSLPLIAPVSFFLLVVNLVYAFFDTFPVIDAATAGGPVQATTTLIYKIYREGFTGLDLSASAAQSVVLMFLVIILTVVQFRYVESKVRYQ.

Residues Met1–Arg11 lie on the Cytoplasmic side of the membrane. The chain crosses the membrane as a helical span at residues Trp12–Pro32. Topologically, residues Ala33–Ala80 are periplasmic. The region spanning Ile76 to Gln284 is the ABC transmembrane type-1 domain. Residues Leu81–Val101 traverse the membrane as a helical segment. Over Arg102–Thr109 the chain is Cytoplasmic. The chain crosses the membrane as a helical span at residues Leu110–Phe130. The Periplasmic portion of the chain corresponds to Asn131–Ala157. A helical transmembrane segment spans residues Met158–Phe178. Residues Ala179–Ser207 are Cytoplasmic-facing. The helical transmembrane segment at Leu208 to Phe228 threads the bilayer. The Periplasmic portion of the chain corresponds to Asp229–Asp262. Residues Leu263–Val283 traverse the membrane as a helical segment. Topologically, residues Gln284 to Gln295 are cytoplasmic.

Belongs to the binding-protein-dependent transport system permease family. UgpAE subfamily. In terms of assembly, the complex is composed of two ATP-binding proteins (UgpC), two transmembrane proteins (UgpA and UgpE) and a solute-binding protein (UgpB).

It localises to the cell inner membrane. In terms of biological role, part of the ABC transporter complex UgpBAEC involved in sn-glycerol-3-phosphate (G3P) import. Probably responsible for the translocation of the substrate across the membrane. The sequence is that of sn-glycerol-3-phosphate transport system permease protein UgpA (ugpA) from Salmonella typhimurium (strain LT2 / SGSC1412 / ATCC 700720).